Reading from the N-terminus, the 352-residue chain is Beta-1,4-xylanase (352 aa).

The N-terminal stretch at 1–23 is a signal peptide; sequence MINQRFSILVLLLILLTFSLGFL. A GH10 domain is found at 29-352; sequence GMEIPSLKEV…KKAFWEIVKF (324 aa). Glu155 acts as the Proton donor in catalysis. The active-site Nucleophile is the Glu262.

This sequence belongs to the glycosyl hydrolase 10 (cellulase F) family.

It is found in the secreted. The enzyme catalyses Endohydrolysis of (1-&gt;4)-beta-D-xylosidic linkages in xylans.. Its pathway is glycan degradation; xylan degradation. The chain is Beta-1,4-xylanase (xynA) from Dictyoglomus thermophilum.